A 527-amino-acid chain; its full sequence is GMP synthase [glutamine-hydrolyzing] (527 aa).

Residues 4–202 (KILILDFGSQ…VLKICGAQPD (199 aa)) enclose the Glutamine amidotransferase type-1 domain. The active-site Nucleophile is the Cys81. Catalysis depends on residues His176 and Glu178. The 193-residue stretch at 203–395 (WEMGHYIDEA…LGLPPAMVYR (193 aa)) folds into the GMPS ATP-PPase domain. 230–236 (SGGVDSS) contributes to the ATP binding site.

As to quaternary structure, homodimer.

It carries out the reaction XMP + L-glutamine + ATP + H2O = GMP + L-glutamate + AMP + diphosphate + 2 H(+). Its pathway is purine metabolism; GMP biosynthesis; GMP from XMP (L-Gln route): step 1/1. Functionally, catalyzes the synthesis of GMP from XMP. This chain is GMP synthase [glutamine-hydrolyzing], found in Paraburkholderia xenovorans (strain LB400).